An 85-amino-acid polypeptide reads, in one-letter code: U4-theraphotoxin-Hhn1a (85 aa).

An N-terminal signal peptide occupies residues 1–22 (MKVTLIAILTCATVLVLHTTAA). Positions 23-48 (EELEAESQLMEVGMPDTELAAVDEER) are excised as a propeptide. 3 disulfides stabilise this stretch: cysteine 52/cysteine 66, cysteine 56/cysteine 77, and cysteine 71/cysteine 82.

The protein belongs to the neurotoxin 12 (Hwtx-2) family. 02 (Hwtx-2) subfamily. Monomer. Expressed by the venom gland.

The protein resides in the secreted. Functionally, neurotoxin active on both insects and mammals. This chain is U4-theraphotoxin-Hhn1a, found in Cyriopagopus hainanus (Chinese bird spider).